We begin with the raw amino-acid sequence, 447 residues long: Ion-translocating oxidoreductase complex subunit C (447 aa).

2 consecutive 4Fe-4S ferredoxin-type domains span residues 359-389 (AEVL…GRIA) and 399-430 (RCRE…LIRY). C369, C372, C375, C379, C408, C411, C414, and C418 together coordinate [4Fe-4S] cluster.

Belongs to the 4Fe4S bacterial-type ferredoxin family. RnfC subfamily. In terms of assembly, the Rnf complex is probably composed of eight subunits, including RnfA, RnfB, RnfC, RnfD, RnfE and RnfG. [4Fe-4S] cluster is required as a cofactor.

It is found in the cell membrane. In terms of biological role, part of a membrane-bound complex that couples electron transfer with translocation of ions across the membrane. Catalyzes Na(+) transport, most probably coupled to electron transfer from reduced ferredoxin to methanophenazine and heterodisulfide reductase. Involved in heterodisulfide reduction during methanogenesis from acetate. This is Ion-translocating oxidoreductase complex subunit C from Methanosarcina acetivorans (strain ATCC 35395 / DSM 2834 / JCM 12185 / C2A).